A 727-amino-acid polypeptide reads, in one-letter code: Transcription activator of gluconeogenesis TRV_01442 (727 aa).

A compositionally biased stretch (polar residues) spans 1–32 (MSPHQTTGQESDNMTVNGENAQASSQYIQSNE). The segment at 1-62 (MSPHQTTGQE…PSRPKRKKAK (62 aa)) is disordered. Positions 39 to 55 (ATEKKASAAKAAKDPSR) are enriched in basic and acidic residues. Residues 65-93 (CYACQRGHLTCGDERPCQRCIKRGFQDAC) constitute a DNA-binding region (zn(2)-C6 fungal-type). Polar residues-rich tracts occupy residues 129-213 (NNVN…TPSA), 267-277 (PSDSGAQRGSI), and 361-379 (MMTT…GAFN). 5 disordered regions span residues 129–224 (NNVN…FNST), 264–297 (DTPP…ESPS), 353–399 (SPAS…STPQ), 533–567 (NHNV…YNSS), and 627–666 (GSNG…QRRW). Low complexity-rich tracts occupy residues 380–399 (SRQN…STPQ) and 543–553 (GLMTGSTSRGS). The segment covering 639-661 (EATSNETNELNGSHTNGATTNGR) has biased composition (polar residues).

This sequence belongs to the ERT1/acuK family.

The protein resides in the nucleus. Transcription factor which regulates nonfermentable carbon utilization. Activator of gluconeogenetic genes. The protein is Transcription activator of gluconeogenesis TRV_01442 of Trichophyton verrucosum (strain HKI 0517).